An 85-amino-acid polypeptide reads, in one-letter code: Augerpeptide-s6a (85 aa).

An N-terminal signal peptide occupies residues 1–20 (MTLTMSTVVFFSLILLTLGL). The propeptide occupies 21 to 43 (QPKDKDEGVMGRSRLGKRGLLMR). 3 cysteine pairs are disulfide-bonded: C54-C65, C58-C70, and C64-C81.

Expressed by the venom duct.

The protein resides in the secreted. The polypeptide is Augerpeptide-s6a (Terebra subulata (Chocolate spotted auger)).